Reading from the N-terminus, the 193-residue chain is UPF0215 protein PH0071 (193 aa).

It belongs to the UPF0215 family.

The chain is UPF0215 protein PH0071 from Pyrococcus horikoshii (strain ATCC 700860 / DSM 12428 / JCM 9974 / NBRC 100139 / OT-3).